The following is a 197-amino-acid chain: Small ribosomal subunit protein uS4B (197 aa).

The S4 RNA-binding domain maps to 88 to 153 (CRLDNMVYRM…IEKYLSNLKN (66 aa)).

This sequence belongs to the universal ribosomal protein uS4 family. As to quaternary structure, part of the 30S ribosomal subunit. Contacts protein S5. The interaction surface between S4 and S5 is involved in control of translational fidelity.

Functionally, one of the primary rRNA binding proteins, it binds directly to 16S rRNA where it nucleates assembly of the body of the 30S subunit. Its function is as follows. With S5 and S12 plays an important role in translational accuracy. This Alkaliphilus oremlandii (strain OhILAs) (Clostridium oremlandii (strain OhILAs)) protein is Small ribosomal subunit protein uS4B.